Consider the following 797-residue polypeptide: Protocadherin beta-9 (797 aa).

The N-terminal stretch at 1-26 is a signal peptide; the sequence is MKTRGFSFPRQRQVLFLFLFWGVSLA. The Extracellular segment spans residues 27–690; the sequence is GSGFGRYSVT…AQADLLTVYL (664 aa). Cadherin domains lie at 35–133, 138–242, 247–347, 352–451, and 456–561; these read VTEE…SPVF, MVLK…VPQF, YETQ…PPEL, LSNS…APAF, and YTLF…SPFV. N-linked (GlcNAc...) asparagine glycosylation is present at Asn-169. Asn-418 carries N-linked (GlcNAc...) asparagine glycosylation. Asn-567 carries an N-linked (GlcNAc...) asparagine glycan. Residues 568–671 enclose the Cadherin 6 domain; that stretch reads GSAPCTELVP…LVDGFSQPYL (104 aa). A helical transmembrane segment spans residues 691-711; it reads VVALASVSSLFLLSVLLFVAV. Residues 712–797 lie on the Cytoplasmic side of the membrane; that stretch reads RLCRRSRAAS…TLPNSFGFNY (86 aa). Residues 777–797 form a disordered region; the sequence is HRGGKEIEENSTLPNSFGFNY. Over residues 786-797 the composition is skewed to polar residues; it reads NSTLPNSFGFNY.

Its subcellular location is the cell membrane. In terms of biological role, potential calcium-dependent cell-adhesion protein. May be involved in the establishment and maintenance of specific neuronal connections in the brain. This Homo sapiens (Human) protein is Protocadherin beta-9 (PCDHB9).